The chain runs to 236 residues: CO-responsive transcriptional regulator RcoM (236 aa).

The PAS domain maps to 1–64 (MDDFAYNLRR…PLRPKVAVLL (64 aa)). A heme-binding site is contributed by His-52. Positions 131–236 (VPLGLGETTE…VTRLRGLLAI (106 aa)) constitute an HTH LytTR-type domain.

Heme serves as cofactor.

Its function is as follows. Activates the expression of the CowN protein in response to carbon monoxide (CO). Is required to sustain N(2)-dependent growth in the presence of low levels of carbon monoxide (CO). The polypeptide is CO-responsive transcriptional regulator RcoM (rcoM) (Rhodospirillum rubrum (strain ATCC 11170 / ATH 1.1.1 / DSM 467 / LMG 4362 / NCIMB 8255 / S1)).